A 194-amino-acid chain; its full sequence is MVEKSIVQEAKDIQLAMELITLGARLQMLESETQLSRGRLIRLYKELRGSPPPKGMLPFSTDWFMTWEQNIHSSMFYNAYRFLLKSGHCEGVEVVVKAYRLYLEQCPPGNNGDAPILALTRAWTLVRFVDSGMLQPTECRCCGGTFITHAHQPVNSFVCSLCQPPSRAVKKRKLSPQPADTNSQLLDGFAQKAM.

Residues cysteine 139, cysteine 142, cysteine 159, and cysteine 162 each coordinate Zn(2+).

The protein belongs to the FlhC family. Heterohexamer composed of two FlhC and four FlhD subunits. Each FlhC binds a FlhD dimer, forming a heterotrimer, and a hexamer assembles by dimerization of two heterotrimers. The cofactor is Zn(2+).

The protein resides in the cytoplasm. Functionally, functions in complex with FlhD as a master transcriptional regulator that regulates transcription of several flagellar and non-flagellar operons by binding to their promoter region. Activates expression of class 2 flagellar genes, including fliA, which is a flagellum-specific sigma factor that turns on the class 3 genes. Also regulates genes whose products function in a variety of physiological pathways. The chain is Flagellar transcriptional regulator FlhC from Xenorhabdus nematophila (Achromobacter nematophilus).